The primary structure comprises 449 residues: Gamma-aminobutyric acid receptor subunit delta (449 aa).

Positions 1–24 (MDVLGWLLLPLLLLCTQPHHGARA) are cleaved as a signal peptide. Residues 25–251 (MNDIGDYVGS…QLRRNRGVYI (227 aa)) are Extracellular-facing. 2 N-linked (GlcNAc...) asparagine glycosylation sites follow: Asn-103 and Asn-106. A disulfide bond links Cys-164 and Cys-178. The chain crosses the membrane as a helical span at residues 252 to 271 (IQSYMPSVLLVAMSWVSFWI). At 272 to 275 (SQAA) the chain is on the cytoplasmic side. A helical transmembrane segment spans residues 276-298 (VPARVSLGITTVLTMTTLMVSAR). Residues 299–308 (SSLPRASAIK) lie on the Extracellular side of the membrane. A helical transmembrane segment spans residues 309 to 331 (ALDVYFWICYVFVFAALVEYAFA). Over 332–423 (HFNADYRKKR…SRLKPIDADT (92 aa)) the chain is Cytoplasmic. Position 390 is a phosphoserine (Ser-390). Residues 424 to 446 (IDIYARAVFPAAFAAVNIIYWAA) form a helical membrane-spanning segment. Residues 447-449 (YTM) lie on the Extracellular side of the membrane.

Belongs to the ligand-gated ion channel (TC 1.A.9) family. Gamma-aminobutyric acid receptor (TC 1.A.9.5) subfamily. GABRD sub-subfamily. In terms of assembly, heteropentamer, formed by a combination of alpha (GABRA1-6), beta (GABRB1-3), gamma (GABRG1-3), delta (GABRD), epsilon (GABRE), rho (GABRR1-3), pi (GABRP) and theta (GABRQ) chains, each subunit exhibiting distinct physiological and pharmacological properties. In terms of tissue distribution, found in the brain, in cerebellar granule cells. Expressed in lungs, in alveolar epithelium.

The protein localises to the cell membrane. The enzyme catalyses chloride(in) = chloride(out). Its function is as follows. Delta subunit of the heteropentameric ligand-gated chloride channel gated by gamma-aminobutyric acid (GABA), a major inhibitory neurotransmitter in the brain. GABA-gated chloride channels, also named GABA(A) receptors (GABAAR), consist of five subunits arranged around a central pore and contain GABA active binding site(s) located at the alpha and beta subunit interface(s). When activated by GABA, GABAARs selectively allow the flow of chloride anions across the cell membrane down their electrochemical gradient. GABAARs containing delta/GABRD subunits are predominantly expressed and located in extrasynaptic or perisynaptic positions on hippocampus and cerebellar granule cells, and contribute to the tonic GABAergic inhibition. GABAAR containing alpha-4-beta-3-delta subunits can simultaneously bind GABA and histamine where histamine binds at the interface of two neighboring beta subunits, which may be involved in the regulation of sleep and wakefulness. The sequence is that of Gamma-aminobutyric acid receptor subunit delta from Rattus norvegicus (Rat).